Reading from the N-terminus, the 1067-residue chain is Probable importin subunit beta-4 (1067 aa).

The Importin N-terminal domain occupies 27-94 (ATRALETKYL…RSNLLDITLK (68 aa)). 6 HEAT repeats span residues 159-196 (KLLL…VLES), 379-416 (GNLP…EIPT), 420-457 (KHHA…GLDK), 591-633 (PFLE…SVET), 890-927 (PFTR…FSTE), and 1013-1050 (QHLG…EIAP).

This sequence belongs to the importin beta family.

It is found in the cytoplasm. The protein localises to the nucleus. Its subcellular location is the nucleus envelope. Functionally, required for nuclear protein import, its predominant substrate seems to be ribosomal proteins. Binds to nucleoporins and the GTP-bound form of gsp1 (Ran). The protein is Probable importin subunit beta-4 (kap123) of Schizosaccharomyces pombe (strain 972 / ATCC 24843) (Fission yeast).